Reading from the N-terminus, the 123-residue chain is Alpha-lactalbumin A (123 aa).

One can recognise a C-type lysozyme domain in the interval 1 to 123; sequence KQFTKCELSQ…KLEQWLCEEL (123 aa). 4 disulfides stabilise this stretch: Cys6–Cys120, Cys28–Cys111, Cys61–Cys77, and Cys73–Cys91. The Ca(2+) site is built by Lys79, Asp82, Asp84, Asp87, and Asp88.

This sequence belongs to the glycosyl hydrolase 22 family. As to quaternary structure, lactose synthase (LS) is a heterodimer of a catalytic component, beta1,4-galactosyltransferase (beta4Gal-T1) and a regulatory component, alpha-lactalbumin (LA). In terms of tissue distribution, mammary gland specific. Secreted in milk.

The protein localises to the secreted. In terms of biological role, regulatory subunit of lactose synthase, changes the substrate specificity of galactosyltransferase in the mammary gland making glucose a good acceptor substrate for this enzyme. This enables LS to synthesize lactose, the major carbohydrate component of milk. In other tissues, galactosyltransferase transfers galactose onto the N-acetylglucosamine of the oligosaccharide chains in glycoproteins. This chain is Alpha-lactalbumin A, found in Equus caballus (Horse).